An 880-amino-acid chain; its full sequence is Alanine--tRNA ligase (880 aa).

Positions 567, 571, 669, and 673 each coordinate Zn(2+).

Belongs to the class-II aminoacyl-tRNA synthetase family. Requires Zn(2+) as cofactor.

It is found in the cytoplasm. It carries out the reaction tRNA(Ala) + L-alanine + ATP = L-alanyl-tRNA(Ala) + AMP + diphosphate. In terms of biological role, catalyzes the attachment of alanine to tRNA(Ala) in a two-step reaction: alanine is first activated by ATP to form Ala-AMP and then transferred to the acceptor end of tRNA(Ala). Also edits incorrectly charged Ser-tRNA(Ala) and Gly-tRNA(Ala) via its editing domain. In Bacillus cereus (strain ATCC 14579 / DSM 31 / CCUG 7414 / JCM 2152 / NBRC 15305 / NCIMB 9373 / NCTC 2599 / NRRL B-3711), this protein is Alanine--tRNA ligase.